The primary structure comprises 265 residues: Homeobox protein engrailed-2-B (265 aa).

Basic and acidic residues-rich tracts occupy residues 1–12 (MEENEQNNREVE) and 102–115 (GEKK…ETLK). 3 disordered regions span residues 1–38 (MEEN…QPHH), 60–138 (INHQ…SSKA), and 156–182 (DRPS…PRTA). Over residues 122–136 (DHSLSSDSDSSQASS) the composition is skewed to low complexity. The segment at residues 176–235 (DKRPRTAFTAEQLQRLKAEFQTNRYLTEQRRQSLAQELGLNESQIKIWFQNKRAKIKKST) is a DNA-binding region (homeobox).

The protein belongs to the engrailed homeobox family.

The protein localises to the nucleus. In Xenopus laevis (African clawed frog), this protein is Homeobox protein engrailed-2-B (en2-b).